An 81-amino-acid chain; its full sequence is Cell division protein ZapB (81 aa).

The stretch at 6–80 (EVFEKLEAKV…LQALLGRMEE (75 aa)) forms a coiled coil. Residues 38–47 (SLAQDVQSAQ) show a composition bias toward polar residues. The segment at 38–67 (SLAQDVQSAQHQREELERENNHLKEQQSGW) is disordered. Positions 48-62 (HQREELERENNHLKE) are enriched in basic and acidic residues.

The protein belongs to the ZapB family. Homodimer. The ends of the coiled-coil dimer bind to each other, forming polymers. Interacts with FtsZ.

The protein localises to the cytoplasm. Non-essential, abundant cell division factor that is required for proper Z-ring formation. It is recruited early to the divisome by direct interaction with FtsZ, stimulating Z-ring assembly and thereby promoting cell division earlier in the cell cycle. Its recruitment to the Z-ring requires functional FtsA or ZipA. The protein is Cell division protein ZapB of Citrobacter koseri (strain ATCC BAA-895 / CDC 4225-83 / SGSC4696).